The following is a 702-amino-acid chain: Methionine--tRNA ligase (702 aa).

The short motif at 14-24 (PYANGPVHLGH) is the 'HIGH' region element. Positions 146, 149, 159, and 162 each coordinate Zn(2+). Positions 344 to 348 (KFSKS) match the 'KMSKS' region motif. Residue K347 coordinates ATP. Residues 601 to 702 (DFLKVDLRVA…GDEINGQQIQ (102 aa)) enclose the tRNA-binding domain.

The protein belongs to the class-I aminoacyl-tRNA synthetase family. MetG type 1 subfamily. In terms of assembly, homodimer. The cofactor is Zn(2+).

The protein resides in the cytoplasm. The enzyme catalyses tRNA(Met) + L-methionine + ATP = L-methionyl-tRNA(Met) + AMP + diphosphate. Is required not only for elongation of protein synthesis but also for the initiation of all mRNA translation through initiator tRNA(fMet) aminoacylation. The sequence is that of Methionine--tRNA ligase from Chlorobium limicola (strain DSM 245 / NBRC 103803 / 6330).